A 152-amino-acid chain; its full sequence is Xanthine-guanine phosphoribosyltransferase (152 aa).

Residues 37–38 (RG), Arg-69, and 88–96 (DDLVDTGGT) each bind 5-phospho-alpha-D-ribose 1-diphosphate. Arg-69 contributes to the GMP binding site. Residue Asp-89 coordinates Mg(2+). Residues Asp-92 and Ile-135 each coordinate guanine. Xanthine-binding residues include Asp-92 and Ile-135. GMP is bound by residues 92–96 (DTGGT) and 134–135 (WI).

Belongs to the purine/pyrimidine phosphoribosyltransferase family. XGPT subfamily. In terms of assembly, homotetramer. Mg(2+) is required as a cofactor.

The protein localises to the cell inner membrane. The catalysed reaction is GMP + diphosphate = guanine + 5-phospho-alpha-D-ribose 1-diphosphate. The enzyme catalyses XMP + diphosphate = xanthine + 5-phospho-alpha-D-ribose 1-diphosphate. It catalyses the reaction IMP + diphosphate = hypoxanthine + 5-phospho-alpha-D-ribose 1-diphosphate. It participates in purine metabolism; GMP biosynthesis via salvage pathway; GMP from guanine: step 1/1. The protein operates within purine metabolism; XMP biosynthesis via salvage pathway; XMP from xanthine: step 1/1. Its function is as follows. Purine salvage pathway enzyme that catalyzes the transfer of the ribosyl-5-phosphate group from 5-phospho-alpha-D-ribose 1-diphosphate (PRPP) to the N9 position of the 6-oxopurines guanine and xanthine to form the corresponding ribonucleotides GMP (guanosine 5'-monophosphate) and XMP (xanthosine 5'-monophosphate), with the release of PPi. To a lesser extent, also acts on hypoxanthine. This chain is Xanthine-guanine phosphoribosyltransferase, found in Escherichia coli O7:K1 (strain IAI39 / ExPEC).